Here is a 295-residue protein sequence, read N- to C-terminus: Phosphatidylglycerol--prolipoprotein diacylglyceryl transferase (295 aa).

7 consecutive transmembrane segments (helical) span residues 17–37 (IKVH…WLLG), 57–77 (LLFY…MLFY), 92–112 (VWDG…ACWW), 127–147 (FMAP…FIGA), 196–216 (QLYE…AVSA), 222–242 (YLVG…VEFV), and 255–275 (WLTR…VLLV). A 1,2-diacyl-sn-glycero-3-phospho-(1'-sn-glycerol) is bound at residue Arg140.

It belongs to the Lgt family.

It localises to the cell inner membrane. It carries out the reaction L-cysteinyl-[prolipoprotein] + a 1,2-diacyl-sn-glycero-3-phospho-(1'-sn-glycerol) = an S-1,2-diacyl-sn-glyceryl-L-cysteinyl-[prolipoprotein] + sn-glycerol 1-phosphate + H(+). The protein operates within protein modification; lipoprotein biosynthesis (diacylglyceryl transfer). In terms of biological role, catalyzes the transfer of the diacylglyceryl group from phosphatidylglycerol to the sulfhydryl group of the N-terminal cysteine of a prolipoprotein, the first step in the formation of mature lipoproteins. The sequence is that of Phosphatidylglycerol--prolipoprotein diacylglyceryl transferase from Stenotrophomonas maltophilia (strain R551-3).